We begin with the raw amino-acid sequence, 247 residues long: uncharacterized protein (247 aa).

This is an uncharacterized protein from Saccharomyces cerevisiae (strain ATCC 204508 / S288c) (Baker's yeast).